The chain runs to 377 residues: Putative FBD-associated F-box protein At5g44940 (377 aa).

Residues 4-50 form the F-box domain; the sequence is FDYISEFPDCLLTQILLNLPTKDSVKTSVLSKRWRNLWLNVPGLRLR. In terms of domain architecture, FBD spans 297-346; sequence IDFHKVPQCLISTLEYVQIEELILKEKSGIKLVDYFLENSAVLKKLTLSF.

The polypeptide is Putative FBD-associated F-box protein At5g44940 (Arabidopsis thaliana (Mouse-ear cress)).